The chain runs to 153 residues: Superoxide dismutase [Cu-Zn] (153 aa).

Cu cation contacts are provided by histidine 46, histidine 48, and histidine 63. A disulfide bridge connects residues cysteine 57 and cysteine 146. The Zn(2+) site is built by histidine 63, histidine 71, histidine 80, and aspartate 83. Histidine 120 is a binding site for Cu cation.

Belongs to the Cu-Zn superoxide dismutase family. Homodimer. Cu cation serves as cofactor. Zn(2+) is required as a cofactor.

The protein localises to the cytoplasm. It catalyses the reaction 2 superoxide + 2 H(+) = H2O2 + O2. Its function is as follows. Destroys radicals which are normally produced within the cells and which are toxic to biological systems. The protein is Superoxide dismutase [Cu-Zn] (SODCC) of Solidago canadensis var. scabra (Tall goldenrod).